The following is a 313-amino-acid chain: Ribosomal RNA small subunit methyltransferase H (313 aa).

Residues glycine 35–histidine 37, aspartate 55, phenylalanine 79, aspartate 101, and glutamine 108 contribute to the S-adenosyl-L-methionine site.

This sequence belongs to the methyltransferase superfamily. RsmH family.

It is found in the cytoplasm. It carries out the reaction cytidine(1402) in 16S rRNA + S-adenosyl-L-methionine = N(4)-methylcytidine(1402) in 16S rRNA + S-adenosyl-L-homocysteine + H(+). Specifically methylates the N4 position of cytidine in position 1402 (C1402) of 16S rRNA. The sequence is that of Ribosomal RNA small subunit methyltransferase H from Musicola paradisiaca (strain Ech703) (Dickeya paradisiaca).